A 490-amino-acid chain; its full sequence is Colicin-5 (490 aa).

A compositionally biased stretch (polar residues) spans 1–20 (MDKVTDNSPDVESTESTEGS). 2 disordered regions span residues 1 to 29 (MDKV…VDTG) and 146 to 171 (QKAR…EIAR). Residues 146-170 (QKAREEAEAAEKALREAERQRDEIA) are compositionally biased toward basic and acidic residues. A helical transmembrane segment spans residues 447-467 (IVALMFSFIVGVPLGFWGIAI).

This sequence belongs to the channel forming colicin family.

The protein resides in the host membrane. Its function is as follows. This colicin is a channel-forming colicin. This class of transmembrane toxins depolarize the cytoplasmic membrane, leading to dissipation of cellular energy. Colicins are polypeptide toxins produced by and active against E.coli and closely related bacteria. The chain is Colicin-5 (cfa) from Escherichia coli.